Consider the following 280-residue polypeptide: MSQFISLTQYQLIEVQGADAEKYLQGQLTSDVVRLASGATTLTAHCDPKGKMNAIYRLFKVSSEQFFLLVKKDILPSGLDALKKYAVFSKVSFDLRDWQIIGVIGEKCGKITPNFSLEIDEKRSILLNETELPVNFNGDEKIWEVADIQAGLPNLSPQTQNEFIPQALNLQAIEQAISFTKGCYIGQETVARAKYRGANKRAMFIFKVQTQQEAEIGSEIEMQLEANWRKTGTITSAVNLDGVLWLQVVMNNDIDSEQQFRLLNSEILLERVQLPYSITE.

To E.coli YgfZ (UP14) and B.aphidicola (subsp. Acyrthosiphon pisum) BU435.

This is an uncharacterized protein from Haemophilus influenzae (strain ATCC 51907 / DSM 11121 / KW20 / Rd).